Here is a 473-residue protein sequence, read N- to C-terminus: ATP-dependent 6-phosphofructokinase 1 (473 aa).

At S71 the chain carries Phosphoserine. ATP-binding positions include G102, 165-166 (RG), and 190-193 (GDGS). D191 contacts Mg(2+). Substrate is bound by residues 219-221 (TID), 264-266 (MGR), E320, and 376-379 (YMIR). D221 serves as the catalytic Proton acceptor.

It belongs to the phosphofructokinase type A (PFKA) family. PPi-dependent PFK group II subfamily. Atypical ATP-dependent clade 'X' sub-subfamily. In terms of assembly, homotetramer. It depends on Mg(2+) as a cofactor. Expressed in roots, leaves, stems and flowers.

It is found in the cytoplasm. It carries out the reaction beta-D-fructose 6-phosphate + ATP = beta-D-fructose 1,6-bisphosphate + ADP + H(+). It functions in the pathway carbohydrate degradation; glycolysis; D-glyceraldehyde 3-phosphate and glycerone phosphate from D-glucose: step 3/4. With respect to regulation, allosterically activated by AMP. Its function is as follows. Catalyzes the phosphorylation of D-fructose 6-phosphate to fructose 1,6-bisphosphate by ATP, the first committing step of glycolysis. The sequence is that of ATP-dependent 6-phosphofructokinase 1 from Arabidopsis thaliana (Mouse-ear cress).